The chain runs to 406 residues: Prisilkin-39 (406 aa).

A signal peptide spans 1–19 (MKGFLTLLLVCAILSTGYC). Transmembrane regions (helical) follow at residues 26–48 (ALTG…GAGA) and 58–80 (VGVG…YGGY). Residues 78–197 (GGYSGYGYGY…YSGYSYGYPT (120 aa)) are 10 X 12 AA tandem repeat of G-G-Y-[SG]-G-Y-[GS]-Y-G-Y-P-[AT].

As to expression, expression is confined to the prism and organic layers of the shell with no expression detected in the nacreous shell layer. Also expressed in the mantle edge, extrapallial fluid, hemolymph and, to a lesser extent, in the viscus (at protein level). In the mantle, localizes to inner epithelial cells of the outer fold and the outer epithelial cells of the middle fold at the bottom of the periostracal groove.

The protein resides in the membrane. In terms of biological role, binds chitin and may serve as a framework constituent participating in shell formation. Inhibits aragonite precipitation and may regulate aragonite growth during shell layer formation. Does not affect calcite crystallization. The polypeptide is Prisilkin-39 (Pinctada fucata (Akoya pearl oyster)).